Consider the following 241-residue polypeptide: Small ribosomal subunit protein uS2c (241 aa).

The protein belongs to the universal ribosomal protein uS2 family.

It localises to the plastid. The protein resides in the chloroplast. In Porphyra purpurea (Red seaweed), this protein is Small ribosomal subunit protein uS2c (rps2).